We begin with the raw amino-acid sequence, 1930 residues long: MSIQFFSYDVGGLIVKEVRLLILWRRSALPNGRTLFARMTQALRIASSDKKYRSIFDRTSLLAFFATPHRSTQHQSPESVALALLNQCYCGLISPWISIFPPNFSKVVARSEVEFRPPTRAHILNVFQDPGPASPIKDSVVVHKSCAVLGVDGEVLIGLDCSHYTLARLLKARDKRYLLRQASHAALRHGKAFQQVVGLFFLDSIRTFDAEGPKFECRKVVSQLASLPQLQSWRQGSVDSRVLWFGTPAMLDPTSLFRTLRSQIQEENQLGDPIFIRVDSTLHRHNELSEPQILASMCQQILRQQPQLTSALQDLLLNVEDAAVGSRDCWKQRTLWNCLLVLLYHPKDAETFCFIDATSSLQTKNLAGQLESVMKESEMPLRLIVSCRSTAKQTPEASTQVDVDLSDAGFDEPLRQDLEEWIRESLECGLTDSTLREALLTQILSSGDFHLARHALEFFASTGSWLTKWSVPSVWAMLSKQSAAELFIEDNIRRHGQWLLIPMLWALEAFEPMQVDEIDVALMLEDNGVAGQVEDFINLLPGISTIRRGVFVIADHVRPAFDYLWGKYFATYQHHVYLAKSCVAALRHHLRVTPAIPQLREDKSSDAAARLCTYAAMNWVRHFSLQRNSETTKYVPHPTIITANETDPGSPNEHAGVSEAFLEDPELSRLWITHLRRALDLDGLDEELGHLILPETLGSRLGICTGWAIRISRQLASMRLSSERDVTNSLLVIGSETDDLAMVQSCLSADPSPTEHTLGYALAAASDPIKEKLLQQVGEPSDEFLYRALLSSICFGNVSVTEDLLVRITDKVRVAQVTPLEGSKLQWPQANESSESAETFRHTPLGVATAYGDADVIDLLINHDISWWDLEERSPPPGTWNALHHAALGGQRNIMCKLLLQQRKGVLNSSARIPNTVTESGNTPLILAASRGFHKIVALLLEDGSMRGYGVDVNIQNEQRSSALLAAARYGFSQTLEMLLTYEGIDYSKTDSNGASILHLALVNDREAAALQILAHKDIFSNEMEYQEANMEANSVNNFEDDDSFSESSVDTTDVVYTVPARPRISLHQKDGSGLTSLTIAIWRNLKSIVEILIAMDADANGPEGEFEAPLVAAAEVGSFELFTMFTKIGATKTEAALNTISTGRTRPLHAACAMGHLEVVRELLKDSVTQLSHTDSNQRTPLCAAISRDQNHVISVLLDRETETGLQEGLWEAARSGKAHILDQLLRRGAEINAQDEYGNTALQWASYYNKPRCVERLLLGGARLDLLDCDNVNALGDAARSGSAEPLKLLVDVGVDVNAEAGGDTALCRAIWAEEVECVSVLLQGGAKFILSSAQSRFENLLTFAVQVSSPEILRLLLKAPEERDLAPTLRSACAMQSTSQLEVLLEFYDPAKVDLGSGWTILHLAAVHGTLAGLTKVLDHATGRAALNYGPKKVGTPFEMAAFSSKESLSKVEHLYSNAALPGLVQPSSRFGTALNAASYRLNDPVVVYLLQKMQLEDINASGARYGNAIQNMLASAWMDTERSLKLLGILLEAGVSLTPTSADRHGTALHTAALFSPKPLVEKVIETSRMLADERDGEGRLPIHLSALQEEWASMMLLSTTTSTIRSVDKMGRNAVHLAAAAGARSVLEKIFEVEENEDLLLEADFDGWTPFHWACRGEDDDCARFLIEKARKIFDSKWDSMKHELVTTDEKTWTPLDVARFHQRREVELLLSLGMTTSDAENWMPDQSQNLGSYCDSCACQIWHEEHHSSALHCKKLYLRFNGWSRMCQLAPTAKRKYTPTLLGYKTCFKVADNLVKARLAKVLVPHSQGPLQRKGRGKGEGEEDEEGIATVENYPVSQSCGVEMIRAFVIDDRRIQPDATRNLNHEVSVGSEDQTQMSLGTGRLFVQSVDSPLEMVMDVAAIFLSSPKSAHKQDETTRAFATAK.

20 ANK repeats span residues Phe840–Glu872, Gly878–Asn908, Ser920–Tyr949, Gln959–Lys989, Asn993–Glu1023, Ser1073–Gly1102, Glu1106–Glu1135, Gly1144–His1174, Asn1178–Thr1205, Gly1206–Ala1235, Tyr1239–Leu1268, Asp1272–Ala1301, Gly1304–Leu1333, Arg1339–Leu1368, Ser1400–Ala1429, Gln1514–Pro1543, Arg1548–Asp1577, Met1615–Leu1644, Asp1651–Asp1680, and Lys1696–Asp1724.

The protein operates within mycotoxin biosynthesis. Ankyrin repeat domain-containing protein; part of the satratoxin SC1 cluster involved in the biosynthesis of satratoxins, trichothecene mycotoxins that are associated with human food poisonings. Satratoxins are suggested to be made by products of multiple gene clusters (SC1, SC2 and SC3) that encode 21 proteins in all, including polyketide synthases, acetyltransferases, and other enzymes expected to modify the trichothecene skeleton. SC1 encodes 10 proteins, SAT1 to SAT10. The largest are SAT8, which encodes a putative polyketide synthase (PKS) with a conventional non-reducing architecture, and SAT10, a putative protein containing four ankyrin repeats and thus may be involved in protein scaffolding. The putative short-chain reductase SAT3 may assist the PKS in some capacity. SAT6 contains a secretory lipase domain and acts probably as a trichothecene esterase. SAT5 encodes a putative acetyltransferase, and so, with SAT6, may affect endogenous protection from toxicity. The probable transcription factor SAT9 may regulate the expression of the SC1 cluster. SC2 encodes proteins SAT11 to SAT16, the largest of which encodes the putative reducing PKS SAT13. SAT11 is a cytochrome P450 monooxygenase, while SAT14 and SAT16 are probable acetyltransferases. The SC2 cluster may be regulated by the transcription factor SAT15. SC3 is a small cluster that encodes 5 proteins, SAT17 to SAT21. SAT21 is a putative MFS-type transporter which may have a role in exporting secondary metabolites. The four other proteins putatively encoded in SC3 include the taurine hydroxylase-like protein SAT17, the O-methyltransferase SAT18, the acetyltransferase SAT19, and the Cys6-type zinc finger SAT20, the latter being probably involved in regulation of SC3 expression. This is Ankyrin repeat domain-containing protein SAT10 from Stachybotrys chartarum (strain CBS 109288 / IBT 7711) (Toxic black mold).